The sequence spans 248 residues: Probable transcriptional regulatory protein Pfl01_4410 (248 aa).

The protein belongs to the TACO1 family.

It is found in the cytoplasm. The chain is Probable transcriptional regulatory protein Pfl01_4410 from Pseudomonas fluorescens (strain Pf0-1).